We begin with the raw amino-acid sequence, 145 residues long: 3-dehydroquinate dehydratase (145 aa).

Tyr-23 acts as the Proton acceptor in catalysis. Substrate contacts are provided by Asn-74, His-80, and Asp-87. His-100 serves as the catalytic Proton donor. Substrate is bound by residues 101-102 and Arg-111; that span reads LS.

This sequence belongs to the type-II 3-dehydroquinase family. As to quaternary structure, homododecamer.

It carries out the reaction 3-dehydroquinate = 3-dehydroshikimate + H2O. The protein operates within metabolic intermediate biosynthesis; chorismate biosynthesis; chorismate from D-erythrose 4-phosphate and phosphoenolpyruvate: step 3/7. Its function is as follows. Catalyzes a trans-dehydration via an enolate intermediate. This is 3-dehydroquinate dehydratase from Halalkalibacterium halodurans (strain ATCC BAA-125 / DSM 18197 / FERM 7344 / JCM 9153 / C-125) (Bacillus halodurans).